The sequence spans 828 residues: Periplasmic nitrate reductase 1 (828 aa).

Positions 1-30 (MKMTRRAFVKANAAASAAAVAGITLPASAA) form a signal peptide, tat-type signal. A 4Fe-4S Mo/W bis-MGD-type domain is found at 41–97 (IKWDKAPCRFCGTGCSVLVGTQNGRVVATQGDPEAPVNKGLNCIKGYFLSKIMYGKD). Residues Cys-48, Cys-51, Cys-55, and Cys-83 each contribute to the [4Fe-4S] cluster site. Mo-bis(molybdopterin guanine dinucleotide) is bound by residues Lys-85, Gln-152, Asn-177, Cys-181, 214-221 (WGSNMAEM), 245-249 (STYYH), 264-266 (QTD), Met-374, Gln-378, Asn-484, 510-511 (SD), Lys-533, Asp-560, and 718-727 (TGRVLEHWHT). Phe-794 is a substrate binding site. The Mo-bis(molybdopterin guanine dinucleotide) site is built by Asn-802 and Lys-819.

This sequence belongs to the prokaryotic molybdopterin-containing oxidoreductase family. NasA/NapA/NarB subfamily. As to quaternary structure, component of the periplasmic nitrate reductase NapAB complex composed of NapA and NapB. It depends on [4Fe-4S] cluster as a cofactor. Mo-bis(molybdopterin guanine dinucleotide) is required as a cofactor. In terms of processing, predicted to be exported by the Tat system. The position of the signal peptide cleavage has not been experimentally proven.

The protein resides in the periplasm. The enzyme catalyses 2 Fe(II)-[cytochrome] + nitrate + 2 H(+) = 2 Fe(III)-[cytochrome] + nitrite + H2O. Functionally, catalytic subunit of the periplasmic nitrate reductase complex NapAB. Receives electrons from NapB and catalyzes the reduction of nitrate to nitrite. This chain is Periplasmic nitrate reductase 1, found in Photobacterium profundum (strain SS9).